The sequence spans 194 residues: Large ribosomal subunit protein bL9 (194 aa).

The tract at residues 148–194 is disordered; it reads QDEAERQARGENVINSQFEEDRAAEAEAAQDMAEGGAGSFEGDHYEA.

Belongs to the bacterial ribosomal protein bL9 family.

Binds to the 23S rRNA. This chain is Large ribosomal subunit protein bL9, found in Caulobacter vibrioides (strain ATCC 19089 / CIP 103742 / CB 15) (Caulobacter crescentus).